Reading from the N-terminus, the 187-residue chain is UPF0301 protein Shewmr7_1270 (187 aa).

It belongs to the UPF0301 (AlgH) family.

The sequence is that of UPF0301 protein Shewmr7_1270 from Shewanella sp. (strain MR-7).